We begin with the raw amino-acid sequence, 205 residues long: Snake venom metalloproteinase BmooMPalpha-I (205 aa).

The region spanning 8 to 204 (RYIELVVVAD…HNPQCILNEP (197 aa)) is the Peptidase M12B domain. Ca(2+) contacts are provided by glutamate 11 and aspartate 95. Disulfide bonds link cysteine 119–cysteine 199, cysteine 159–cysteine 183, and cysteine 161–cysteine 166. Residue histidine 144 coordinates Zn(2+). Residue glutamate 145 is part of the active site. Histidine 148 and histidine 154 together coordinate Zn(2+). 2 residues coordinate Ca(2+): cysteine 199 and asparagine 202.

Belongs to the venom metalloproteinase (M12B) family. P-I subfamily. In terms of assembly, monomer. It depends on Zn(2+) as a cofactor. As to expression, expressed by the venom gland.

It is found in the secreted. With respect to regulation, inhibited by EDTA. Not inhibited by the serine proteinase inhibitors aprotinin and benzamidine. In terms of biological role, snake venom zinc metalloproteinase that cleaves the alpha chain of fibrinogen (FGA) first followed by the beta chain (FGB) and shows no effect on the gamma chain. Cleaves only the beta chain of fibrin, leaving the gamma-dimer untouched. Shows proteolytic activity towards azocasein. Causes defibrinogenation when intraperitoneally administered on mice. This chain is Snake venom metalloproteinase BmooMPalpha-I, found in Bothrops moojeni (Lance-headed viper).